The following is a 1055-amino-acid chain: cAMP and cAMP-inhibited cGMP 3',5'-cyclic phosphodiesterase 10A (1055 aa).

3 disordered regions span residues 1–90 (MASL…RGGG), 151–193 (AAAA…GRRR), and 205–250 (LPAR…RPQG). Composition is skewed to gly residues over residues 79 to 90 (GGPGALSARGGG) and 154 to 168 (AGGG…GGGQ). A compositionally biased stretch (low complexity) spans 220–231 (PLGQAARRAGSP). The segment covering 232-243 (GFPGAGPGGGGQ) has biased composition (gly residues). Threonine 282 carries the phosphothreonine modification. 2 consecutive GAF domains span residues 367-510 (DNQL…SVAI) and 542-688 (AIDS…ALAL). Residues 562–563 (RC), 606–607 (IA), threonine 640, glutamine 659, and histidine 791 contribute to the 3',5'-cyclic AMP site. The PDEase domain occupies 718-1035 (TSEEWQGLMQ…SQWEKVIRGE (318 aa)). Histidine 791 functions as the Proton donor in the catalytic mechanism. Histidine 791 provides a ligand contact to 3',5'-cyclic GMP. Residues histidine 795, histidine 829, aspartate 830, and aspartate 940 each coordinate a divalent metal cation. Position 992 (glutamine 992) interacts with 3',5'-cyclic AMP. Residue glutamine 992 participates in 3',5'-cyclic GMP binding.

This sequence belongs to the cyclic nucleotide phosphodiesterase family. In terms of assembly, homodimer. A divalent metal cation is required as a cofactor. Post-translationally, phosphorylated on Thr-16. In terms of tissue distribution, abundant in the putamen and caudate nucleus regions of brain and testis, moderately expressed in the thyroid gland, pituitary gland, thalamus and cerebellum.

The protein resides in the cytoplasm. Its subcellular location is the cytosol. The enzyme catalyses a nucleoside 3',5'-cyclic phosphate + H2O = a nucleoside 5'-phosphate + H(+). It carries out the reaction 3',5'-cyclic AMP + H2O = AMP + H(+). The catalysed reaction is 3',5'-cyclic GMP + H2O = GMP + H(+). It functions in the pathway purine metabolism; 3',5'-cyclic AMP degradation; AMP from 3',5'-cyclic AMP: step 1/1. Its pathway is purine metabolism; 3',5'-cyclic GMP degradation; GMP from 3',5'-cyclic GMP: step 1/1. With respect to regulation, inhibited by dipyridamole and moderately by IBMX. cGMP acts as an allosteric activator. Its function is as follows. Plays a role in signal transduction by regulating the intracellular concentration of cyclic nucleotides. Can hydrolyze both cAMP and cGMP, but has higher affinity for cAMP and is more efficient with cAMP as substrate. May play a critical role in regulating cAMP and cGMP levels in the striatum, a region of the brain that contributes to the control of movement and cognition. The polypeptide is cAMP and cAMP-inhibited cGMP 3',5'-cyclic phosphodiesterase 10A (PDE10A) (Homo sapiens (Human)).